The primary structure comprises 125 residues: Ixonnexin (125 aa).

An N-terminal signal peptide occupies residues 1 to 21; sequence MGLTGTTLVLVCVAFFGSAAA. N-linked (GlcNAc...) asparagine glycosylation is present at Asn-26. Positions 81 to 125 are disordered; it reads TSSGGPDDTGDNTPPPTEKPKQKKKKPKKTKKPKRKSKKDQKENF. A compositionally biased stretch (basic residues) spans 101-119; that stretch reads KQKKKKPKKTKKPKRKSKK.

Belongs to the salp14 family. As to quaternary structure, homodimer. Interacts with host PLG. Interacts with host PLAT. As to expression, saliva (at protein level).

The protein localises to the secreted. Its function is as follows. Salivary protein that promotes host fibrinolysis via accelerating host plasmin generation from plasminogen (PLG) initiated by tPA/tissue-type plasminogen activator (PLAT). Does not affect urokinase (PLAU)-mediated fibrinolysis in the host. Enhances amidolytic activity of host coagulation factor Xa (F10). The sequence is that of Ixonnexin from Ixodes scapularis (Black-legged tick).